The sequence spans 753 residues: Bifunctional terpene synthase FUP1 (753 aa).

The terpene cyclase stretch occupies residues M1 to W329. D96 provides a ligand contact to Mg(2+). The short motif at D96 to E100 is the DDXXD 1 element. The short motif at N231–E239 is the NSE/DTE element. The interval K330 to S745 is prenyltransferase. K461, R464, and H493 together coordinate isopentenyl diphosphate. D500 and D504 together coordinate Mg(2+). The short motif at D500 to D504 is the DDXXD 2 element. R509 is a binding site for dimethylallyl diphosphate. Position 510 (R510) interacts with isopentenyl diphosphate. Residues K587, T588, Q625, N632, K640, and K650 each contribute to the dimethylallyl diphosphate site.

This sequence in the N-terminal section; belongs to the terpene synthase family. The protein in the C-terminal section; belongs to the FPP/GGPP synthase family. As to quaternary structure, hexamer. It depends on Mg(2+) as a cofactor.

It catalyses the reaction isopentenyl diphosphate + (2E,6E)-farnesyl diphosphate = (2E,6E,10E)-geranylgeranyl diphosphate + diphosphate. It functions in the pathway secondary metabolite biosynthesis; terpenoid biosynthesis. In terms of biological role, bifunctional terpene synthase; part of the gene cluster that mediates the biosynthesis of the mycotoxin fusaproliferin (FUP) that belongs to the class of bicyclic sesterterpenoids. The FUP biosynthetic pathway starts with the enzyme encoded by FUP1 that combines a C-terminal prenyltransferase domain responsible for the synthesis of geranylgeranyl diphosphate with the N-terminal terpene cyclase domain, to yield preterpestacin I. Preterpestacin I is then decorated by oxygenation steps that are catalyzed by two cytochrome P450 monooxygenases. First, FUP2 introduces a hydroxyl group at the C-24 position resulting in the formation of preterpestacin IIa, which can be further oxidized. The second P450 monooxygenase catalyzes the hydroxylation at C-16 and C-17 of preterpestacin IIa, producing preterpestacin III. Subsequently, the FAD-dependent oxidoreductase FUP4 catalyzes the oxidation of the hydroxy group at the C-16 position to a keto group, leading to the formation of (-)-terpestacin, which is the immediate precursor of FUP. The final step in the proposed biosynthetic pathway is the addition of an acetyl group at the C-24 position of terpestacin, which is catalyzed by the acetyltransferase FUP5. The protein is Bifunctional terpene synthase FUP1 of Fusarium proliferatum (strain ET1) (Orchid endophyte fungus).